Reading from the N-terminus, the 396-residue chain is Apurinic-apyrimidinic endonuclease (396 aa).

Over residues 31–41 (KGRGKIQKHIQ) the composition is skewed to basic residues. Positions 31 to 100 (KGRGKIQKHI…TSGETIAQKK (70 aa)) are disordered. Positions 55 to 70 (NQSPGTTVEETLTEEN) are enriched in polar residues. Positions 72 to 85 (STDKEETSKLENKP) are enriched in basic and acidic residues. Residues His185, His225, Glu261, Asp295, His298, His332, Asp345, His347, and Glu377 each contribute to the Zn(2+) site.

This sequence belongs to the AP endonuclease 2 family. The cofactor is Zn(2+).

The protein resides in the nucleus. This chain is Apurinic-apyrimidinic endonuclease (apn-1), found in Caenorhabditis elegans.